We begin with the raw amino-acid sequence, 203 residues long: Small ribosomal subunit protein uS4c (203 aa).

Residues 15–43 (LGSLPGLTSKRPRSGSDLRNQSRSGKRSQ) are disordered. Residues 89-169 (MRLDNILFRL…LPKHLTLHSL (81 aa)) form the S4 RNA-binding domain.

The protein belongs to the universal ribosomal protein uS4 family. In terms of assembly, part of the 30S ribosomal subunit. Contacts protein S5. The interaction surface between S4 and S5 is involved in control of translational fidelity.

The protein resides in the plastid. Its subcellular location is the chloroplast. Its function is as follows. One of the primary rRNA binding proteins, it binds directly to 16S rRNA where it nucleates assembly of the body of the 30S subunit. With S5 and S12 plays an important role in translational accuracy. The polypeptide is Small ribosomal subunit protein uS4c (rps4) (Illicium oligandrum (Star anise)).